Here is a 451-residue protein sequence, read N- to C-terminus: MSTPYEPEFQQAYKEIVGSIESSKLFEVHPELKRVLPIISIPERVLEFRVTWEDDKGNCRVNTGYRVQFNSALGPYKGGLRFHPSVNLSILKFLGFEQIFKNALTGLPMGGGKGGSDFDPKGKSDNEIRRFSQAFMRQLFRYIGPQTDVPAGDIGVTGFVVMHMFGEYKRLRNEYSGVVTGKHMLTGGSNIRPEATGYGVVYYVKHMIEHRTKGAETLKGKRVAISGSGNVAQYAALKCIQEGAIVKSISDSKGVLIAKTAEGLVPEEIHEIMALKEKRASIADSASLCKKHHYIAGARPWTNVGEIDIALPCATQNEVSGEEAAALIKQGCRYVAEGSNMGSSAEAVEVFEKSRASGEGCWLAPGKAANAGGVAVSGLEMAQNAQFSTWTHAEVDAKLAGIMQNIFEQSTDVASKYCDSGSNNIPSLVDGANIAGFLKVATAMQAVGDWW.

Lys113 is a catalytic residue. Ser252 is subject to Phosphoserine.

Belongs to the Glu/Leu/Phe/Val dehydrogenases family. Homohexamer.

The enzyme catalyses L-glutamate + NADP(+) + H2O = 2-oxoglutarate + NH4(+) + NADPH + H(+). This Schizosaccharomyces pombe (strain 972 / ATCC 24843) (Fission yeast) protein is NADP-specific glutamate dehydrogenase (gdh1).